Here is a 463-residue protein sequence, read N- to C-terminus: Chromosomal replication initiator protein DnaA (463 aa).

The interval 1-83 (MSLSLWQQCL…LRFEVGSKPI (83 aa)) is domain I, interacts with DnaA modulators. A domain II region spans residues 83–126 (IVPVAVSSAASSGASVPPAAVRASSLARPSWERVTAQPELSYRS). The segment at 127–343 (NVNPKHTFDN…GALNRVIANA (217 aa)) is domain III, AAA+ region. Positions 171, 173, 174, and 175 each coordinate ATP. Residues 344 to 463 (NFTGRAITID…FSNLIRTLSS (120 aa)) are domain IV, binds dsDNA.

It belongs to the DnaA family. As to quaternary structure, oligomerizes as a right-handed, spiral filament on DNA at oriC.

Its subcellular location is the cytoplasm. Functionally, plays an essential role in the initiation and regulation of chromosomal replication. ATP-DnaA binds to the origin of replication (oriC) to initiate formation of the DNA replication initiation complex once per cell cycle. Binds the DnaA box (a 9 base pair repeat at the origin) and separates the double-stranded (ds)DNA. Forms a right-handed helical filament on oriC DNA; dsDNA binds to the exterior of the filament while single-stranded (ss)DNA is stabiized in the filament's interior. The ATP-DnaA-oriC complex binds and stabilizes one strand of the AT-rich DNA unwinding element (DUE), permitting loading of DNA polymerase. After initiation quickly degrades to an ADP-DnaA complex that is not apt for DNA replication. Binds acidic phospholipids. This Edwardsiella ictaluri (strain 93-146) protein is Chromosomal replication initiator protein DnaA.